The chain runs to 485 residues: Glutamyl-tRNA(Gln) amidotransferase subunit A (485 aa).

Active-site charge relay system residues include K78 and S153. The active-site Acyl-ester intermediate is the S177.

The protein belongs to the amidase family. GatA subfamily. In terms of assembly, heterotrimer of A, B and C subunits.

It catalyses the reaction L-glutamyl-tRNA(Gln) + L-glutamine + ATP + H2O = L-glutaminyl-tRNA(Gln) + L-glutamate + ADP + phosphate + H(+). Functionally, allows the formation of correctly charged Gln-tRNA(Gln) through the transamidation of misacylated Glu-tRNA(Gln) in organisms which lack glutaminyl-tRNA synthetase. The reaction takes place in the presence of glutamine and ATP through an activated gamma-phospho-Glu-tRNA(Gln). The sequence is that of Glutamyl-tRNA(Gln) amidotransferase subunit A from Bacillus cereus (strain AH820).